A 304-amino-acid chain; its full sequence is D-alanine--D-alanine ligase (304 aa).

Residues 103-301 (KQVWLALGLP…FDDLVWRILE (199 aa)) enclose the ATP-grasp domain. Residue 132-187 (VEMLGFPVIIKPAKEGSSVGVSRVFALEHLEEAVALAARYEGELLMEQLIEGDELT) coordinates ATP. The Mg(2+) site is built by aspartate 254, glutamate 268, and asparagine 270.

It belongs to the D-alanine--D-alanine ligase family. It depends on Mg(2+) as a cofactor. Mn(2+) serves as cofactor.

Its subcellular location is the cytoplasm. The catalysed reaction is 2 D-alanine + ATP = D-alanyl-D-alanine + ADP + phosphate + H(+). Its pathway is cell wall biogenesis; peptidoglycan biosynthesis. Cell wall formation. This Xylella fastidiosa (strain Temecula1 / ATCC 700964) protein is D-alanine--D-alanine ligase.